We begin with the raw amino-acid sequence, 353 residues long: UDP-N-acetylglucosamine--N-acetylmuramyl-(pentapeptide) pyrophosphoryl-undecaprenol N-acetylglucosamine transferase (353 aa).

Residues 10–12, Asn-124, Ser-183, and Gln-283 each bind UDP-N-acetyl-alpha-D-glucosamine; that span reads TGG.

Belongs to the glycosyltransferase 28 family. MurG subfamily.

The protein localises to the cell inner membrane. The catalysed reaction is di-trans,octa-cis-undecaprenyl diphospho-N-acetyl-alpha-D-muramoyl-L-alanyl-D-glutamyl-meso-2,6-diaminopimeloyl-D-alanyl-D-alanine + UDP-N-acetyl-alpha-D-glucosamine = di-trans,octa-cis-undecaprenyl diphospho-[N-acetyl-alpha-D-glucosaminyl-(1-&gt;4)]-N-acetyl-alpha-D-muramoyl-L-alanyl-D-glutamyl-meso-2,6-diaminopimeloyl-D-alanyl-D-alanine + UDP + H(+). The protein operates within cell wall biogenesis; peptidoglycan biosynthesis. Its function is as follows. Cell wall formation. Catalyzes the transfer of a GlcNAc subunit on undecaprenyl-pyrophosphoryl-MurNAc-pentapeptide (lipid intermediate I) to form undecaprenyl-pyrophosphoryl-MurNAc-(pentapeptide)GlcNAc (lipid intermediate II). This Helicobacter pylori (strain HPAG1) protein is UDP-N-acetylglucosamine--N-acetylmuramyl-(pentapeptide) pyrophosphoryl-undecaprenol N-acetylglucosamine transferase.